Consider the following 478-residue polypeptide: ATP-dependent DNA helicase RecQ (478 aa).

One can recognise a Helicase ATP-binding domain in the interval 28–202 (IDCLLARRDC…VEGLNLRSPE (175 aa)). 41–48 (LPTGGGKS) provides a ligand contact to ATP. The short motif at 142 to 145 (DEAH) is the DEAH box element. The Helicase C-terminal domain maps to 229–380 (QLRRFLLKHL…RAEVLSQQIP (152 aa)). Zn(2+)-binding residues include C447, C467, C470, and C473.

It belongs to the helicase family. RecQ subfamily. It depends on Mg(2+) as a cofactor. Zn(2+) serves as cofactor.

The catalysed reaction is Couples ATP hydrolysis with the unwinding of duplex DNA by translocating in the 3'-5' direction.. The enzyme catalyses ATP + H2O = ADP + phosphate + H(+). Its function is as follows. An ATP-dependent DNA helicase which unwinds DNA in a 3'-5' direction. The chain is ATP-dependent DNA helicase RecQ from Synechocystis sp. (strain ATCC 27184 / PCC 6803 / Kazusa).